The following is a 731-amino-acid chain: RNA-binding protein RMD9-like, mitochondrial (731 aa).

A compositionally biased stretch (polar residues) spans 1 to 10 (MIRLAQQTQV). Disordered regions lie at residues 1 to 29 (MIRL…NSLT), 77 to 133 (GGNI…GNSI), and 590 to 630 (QNDR…FNNP). Residues 83-100 (NNNNHLAQNNSNNSNNHH) show a composition bias toward low complexity. Basic residues predominate over residues 101–122 (NNNRNHHHNNNRNHHQNNHNHS). S132 bears the Phosphoserine mark. A compositionally biased stretch (polar residues) spans 598–617 (SNMNSTQISRTATPSPSLTP).

The protein belongs to the RMD9 family. As to quaternary structure, monomer. Post-translationally, phosphorylated. Phosphorylation promotes binding to RNA.

It localises to the mitochondrion inner membrane. Its function is as follows. May be involved in the processing or stability of mitochondrial mRNAs. The polypeptide is RNA-binding protein RMD9-like, mitochondrial (Saccharomyces cerevisiae (strain ATCC 204508 / S288c) (Baker's yeast)).